A 663-amino-acid chain; its full sequence is Chaperone protein HtpG (663 aa).

The tract at residues 1–352 (MTKQTLSFQA…SADLPLNVSR (352 aa)) is a; substrate-binding. Basic and acidic residues predominate over residues 218–228 (ELINPSDEKGG). The segment at 218–237 (ELINPSDEKGGRQPGGMVKT) is disordered. Residues 353-595 (ELLQESRDVK…DHGMSTQLAR (243 aa)) are b. The tract at residues 596-663 (MLKQAGQAAP…YVKRVNALLV (68 aa)) is c.

This sequence belongs to the heat shock protein 90 family. As to quaternary structure, homodimer.

It localises to the cytoplasm. Functionally, molecular chaperone. Has ATPase activity. The polypeptide is Chaperone protein HtpG (Albidiferax ferrireducens (strain ATCC BAA-621 / DSM 15236 / T118) (Rhodoferax ferrireducens)).